Here is a 929-residue protein sequence, read N- to C-terminus: Ribonucleoside-diphosphate reductase large chain (929 aa).

Positions 1 to 92 constitute an ATP-cone domain; it reads MYVKKRDGRQ…VSNLHKQTKK (92 aa). ATP contacts are provided by residues 5 to 6, 11 to 17, Thr53, and Asp57; these read KR and ERVQFDK. Residues Ser202 and Ser217 each contribute to the GDP site. Cys218 and Cys444 are oxidised to a cystine. DTTP is bound by residues 226–228, Lys243, Arg256, and 263–264; these read DSI and AG. Asn427 lines the GDP pocket. The active-site Proton acceptor is Asn427. The active-site Cysteine radical intermediate is the Cys429. Residues Glu431 and 605–608 contribute to the GDP site; that span reads TAST. The active-site Proton acceptor is Glu431. The interval 789–904 is disordered; that stretch reads ENTSGPRPYA…RDENIYSNAP (116 aa). The span at 800-809 shows a compositional bias: polar residues; sequence TGVSGTSTPI. A compositionally biased stretch (basic and acidic residues) spans 868–884; the sequence is VKTEDIGSPLLERKEGQ. Residues 885–894 show a composition bias toward acidic residues; sequence NEDVDEDSQE.

Belongs to the ribonucleoside diphosphate reductase large chain family.

It carries out the reaction a 2'-deoxyribonucleoside 5'-diphosphate + [thioredoxin]-disulfide + H2O = a ribonucleoside 5'-diphosphate + [thioredoxin]-dithiol. With respect to regulation, under complex allosteric control mediated by deoxynucleoside triphosphates and ATP binding to separate specificity and activation sites on the large subunit. The type of nucleotide bound at the specificity site determines substrate preference. It seems probable that ATP makes the enzyme reduce CDP and UDP, dGTP favors ADP reduction and dTTP favors GDP reduction. Stimulated by ATP and inhibited by dATP binding to the activity site. In terms of biological role, provides the precursors necessary for DNA synthesis. Catalyzes the biosynthesis of deoxyribonucleotides from the corresponding ribonucleotides. This Neurospora crassa (strain ATCC 24698 / 74-OR23-1A / CBS 708.71 / DSM 1257 / FGSC 987) protein is Ribonucleoside-diphosphate reductase large chain (rnr-1).